Reading from the N-terminus, the 71-residue chain is UPF0346 protein MGAS2096_Spy0401 (71 aa).

The protein belongs to the UPF0346 family.

In Streptococcus pyogenes serotype M12 (strain MGAS2096), this protein is UPF0346 protein MGAS2096_Spy0401.